Here is a 241-residue protein sequence, read N- to C-terminus: Fatty acid metabolism regulator protein (241 aa).

The HTH gntR-type domain occupies 11–79; the sequence is QSPAGLAEEY…HGKPTKVNNI (69 aa). The segment at residues 39–58 is a DNA-binding region (H-T-H motif); sequence ERELAEKIGVTRTTLREVLQ.

Homodimer.

It localises to the cytoplasm. Functionally, multifunctional regulator of fatty acid metabolism. This chain is Fatty acid metabolism regulator protein, found in Pasteurella multocida (strain Pm70).